The following is an 84-amino-acid chain: Large ribosomal subunit protein bL27 (84 aa).

Residues 1 to 22 (MAHKKAGGSTRNGRDSESKRLG) are disordered.

This sequence belongs to the bacterial ribosomal protein bL27 family.

This is Large ribosomal subunit protein bL27 from Shewanella denitrificans (strain OS217 / ATCC BAA-1090 / DSM 15013).